The primary structure comprises 69 residues: Small archaeal modifier protein 2 (69 aa).

Lys-55 is covalently cross-linked (Glycyl lysine isopeptide (Lys-Gly) (interchain with G-Cter in SAMP2)). Gly-69 carries the post-translational modification 1-thioglycine; alternate. Gly-69 is modified (glycyl adenylate; alternate). Gly-69 participates in a covalent cross-link: Glycyl lysine isopeptide (Gly-Lys) (interchain with K-? in acceptor proteins); alternate.

Post-translationally, the C-terminal glycine is likely acyl-adenylated (-COAMP) by UbaA, and also probably thiocarboxylated (-COSH) to function in sulfur transfer.

Its function is as follows. Functions as a protein modifier covalently attached to lysine residues of substrate proteins, as well as a sulfur carrier in tRNA thiolation. The protein modification process is termed sampylation and involves the formation of an isopeptide bond between the SAMP2 C-terminal glycine carboxylate and the epsilon-amino group of lysine residues on target proteins. Is able to form polymeric chains with itself likely at Lys-55, similar to ubiquitin and other ubiquitin-like proteins. May serve as a proteolytic signal in the cell to target proteins for degradation by proteasomes. The protein is Small archaeal modifier protein 2 of Pyrococcus furiosus (strain ATCC 43587 / DSM 3638 / JCM 8422 / Vc1).